A 496-amino-acid chain; its full sequence is Serine/threonine-protein kinase Sgk3 (496 aa).

Residues 12-124 (SCPSVSIPSS…AFLQMDSPRH (113 aa)) form the PX domain. Residues 121-157 (SPRHQSDPSEDEDERSTSKPHSTSRNINLGPTGNPHA) form a disordered region. Phosphoserine occurs at positions 126 and 129. Residues 139-151 (KPHSTSRNINLGP) are compositionally biased toward polar residues. The 258-residue stretch at 162-419 (FDFLKVIGKG…FLEIQNHPFF (258 aa)) folds into the Protein kinase domain. ATP is bound by residues 168-176 (IGKGSFGKV) and Lys-191. Residues 195–205 (KKIVLNRKEQK) carry the Nuclear localization signal motif. The active-site Proton acceptor is the Asp-286. Residue Thr-320 is modified to Phosphothreonine; by PDPK1. In terms of domain architecture, AGC-kinase C-terminal spans 420 to 496 (ESLSWTDLVQ…YAPPSEDLFL (77 aa)). The residue at position 486 (Ser-486) is a Phosphoserine.

It belongs to the protein kinase superfamily. AGC Ser/Thr protein kinase family. Interacts with GSK3B and FLII. Interacts with PDPK1 in a phosphorylation-dependent manner. In terms of processing, activated by phosphorylation on Ser-486 by an unknown kinase (may be mTORC2 but not confirmed), transforming it into a substrate for PDPK1 which then phosphorylates it on Thr-320. Widely expressed, predominantly in the heart, spleen and 7-day embryo.

Its subcellular location is the cytoplasmic vesicle. It is found in the early endosome. The protein resides in the recycling endosome. It catalyses the reaction L-seryl-[protein] + ATP = O-phospho-L-seryl-[protein] + ADP + H(+). The catalysed reaction is L-threonyl-[protein] + ATP = O-phospho-L-threonyl-[protein] + ADP + H(+). With respect to regulation, two specific sites, one in the kinase domain (Thr-320) and the other in the C-terminal regulatory region (Ser-486), need to be phosphorylated for its full activation. Its function is as follows. Serine/threonine-protein kinase which is involved in the regulation of a wide variety of ion channels, membrane transporters, cell growth, proliferation, survival and migration. Up-regulates Na(+) channels: SCNN1A/ENAC and SCN5A, K(+) channels: KCNA3/KV1.3, KCNE1, KCNQ1 and KCNH2/HERG, epithelial Ca(2+) channels: TRPV5 and TRPV6, chloride channel: BSND, creatine transporter: SLC6A8, Na(+)/dicarboxylate cotransporter: SLC13A2/NADC1, Na(+)-dependent phosphate cotransporter: SLC34A2/NAPI-2B, amino acid transporters: SLC1A5/ASCT2 and SLC6A19, glutamate transporters: SLC1A3/EAAT1, SLC1A6/EAAT4 and SLC1A7/EAAT5, glutamate receptors: GRIA1/GLUR1 and GRIK2/GLUR6, Na(+)/H(+) exchanger: SLC9A3/NHE3, and the Na(+)/K(+) ATPase. Plays a role in the regulation of renal tubular phosphate transport and bone density. Phosphorylates NEDD4L and GSK3B. Positively regulates ER transcription activity through phosphorylation of FLII. Negatively regulates the function of ITCH/AIP4 via its phosphorylation and thereby prevents CXCR4 from being efficiently sorted to lysosomes. The protein is Serine/threonine-protein kinase Sgk3 (Sgk3) of Mus musculus (Mouse).